An 874-amino-acid polypeptide reads, in one-letter code: Alanine--tRNA ligase (874 aa).

Zn(2+) is bound by residues H562, H566, C664, and H668.

It belongs to the class-II aminoacyl-tRNA synthetase family. Zn(2+) is required as a cofactor.

It is found in the cytoplasm. It catalyses the reaction tRNA(Ala) + L-alanine + ATP = L-alanyl-tRNA(Ala) + AMP + diphosphate. Catalyzes the attachment of alanine to tRNA(Ala) in a two-step reaction: alanine is first activated by ATP to form Ala-AMP and then transferred to the acceptor end of tRNA(Ala). Also edits incorrectly charged Ser-tRNA(Ala) and Gly-tRNA(Ala) via its editing domain. This Neisseria meningitidis serogroup C (strain 053442) protein is Alanine--tRNA ligase.